We begin with the raw amino-acid sequence, 633 residues long: Chaperone protein DnaK (633 aa).

At Thr-196 the chain carries Phosphothreonine; by autocatalysis. Residues 594-633 form a disordered region; sequence NLYGQPGAEPQPETNGHAGGSKGGDGAVNAEYEVIDGDDK. Gly residues predominate over residues 610–619; sequence HAGGSKGGDG.

This sequence belongs to the heat shock protein 70 family.

Its function is as follows. Acts as a chaperone. This chain is Chaperone protein DnaK, found in Chlorobaculum tepidum (strain ATCC 49652 / DSM 12025 / NBRC 103806 / TLS) (Chlorobium tepidum).